Reading from the N-terminus, the 419-residue chain is Pyrrolysine--tRNA ligase (419 aa).

Residues 100 to 157 (APKVKKAMPKSVSRAPKPLENSVSAKASTNTSRSVPSPAKSTPNSSVPASAPAPSLTR) form a disordered region. Residues 120–141 (NSVSAKASTNTSRSVPSPAKST) are compositionally biased toward polar residues. Residues 142 to 154 (PNSSVPASAPAPS) show a composition bias toward low complexity.

This sequence belongs to the class-II aminoacyl-tRNA synthetase family.

It is found in the cytoplasm. It carries out the reaction tRNA(Pyl) + L-pyrrolysine + ATP = L-pyrrolysyl-tRNA(Pyl) + AMP + diphosphate. In terms of biological role, catalyzes the attachment of pyrrolysine to tRNA(Pyl). Pyrrolysine is a lysine derivative encoded by the termination codon UAG. This chain is Pyrrolysine--tRNA ligase (pylS), found in Methanosarcina barkeri.